The sequence spans 147 residues: Hemoglobin subunit beta (147 aa).

Val2 bears the N-acetylvaline mark. One can recognise a Globin domain in the interval 3–147 (HLTGDEKAAV…VANALAHKYH (145 aa)). Position 13 is a phosphothreonine (Thr13). Phosphoserine is present on Ser45. Lys60 is modified (N6-acetyllysine). His64 serves as a coordination point for heme b. Lys83 carries the N6-acetyllysine modification. His93 contacts heme b. An S-nitrosocysteine modification is found at Cys94. Lys145 carries the post-translational modification N6-acetyllysine.

This sequence belongs to the globin family. Heterotetramer of two alpha chains and two beta chains. Red blood cells.

Its function is as follows. Involved in oxygen transport from the lung to the various peripheral tissues. The protein is Hemoglobin subunit beta (HBB) of Saimiri sciureus (Common squirrel monkey).